The sequence spans 378 residues: Mitogen-activated protein kinase mpkC (378 aa).

In terms of domain architecture, Protein kinase spans 20 to 300 (YVNPQPIGMG…AQDALRHPYL (281 aa)). ATP contacts are provided by residues 26–34 (IGMGSFGLV) and Lys49. Catalysis depends on Asp141, which acts as the Proton acceptor.

The protein belongs to the protein kinase superfamily. Ser/Thr protein kinase family. MAP kinase subfamily. Mg(2+) is required as a cofactor.

Its subcellular location is the nucleus. The enzyme catalyses L-seryl-[protein] + ATP = O-phospho-L-seryl-[protein] + ADP + H(+). It carries out the reaction L-threonyl-[protein] + ATP = O-phospho-L-threonyl-[protein] + ADP + H(+). Its activity is regulated as follows. Activated by threonine and tyrosine phosphorylation. Mitogen-activated protein kinase (MAPK), part of the high-osmolarity glycerol (HOG) pathway. With sakA, plays a role in the osmotic and oxidative stress responses. Involved in paradoxical growth, the cell wall integrity (CWI) pathway and biofilm formation. SakA and mpkC collaborate during virulence and mpkC could act by modulating sakA activity upon exposure to several types of stresses and during cell wall biosynthesis. The protein is Mitogen-activated protein kinase mpkC of Aspergillus fumigatus (strain CBS 144.89 / FGSC A1163 / CEA10) (Neosartorya fumigata).